The chain runs to 337 residues: Adenine deaminase (337 aa).

Residues His14, His16, and His194 each contribute to the Zn(2+) site. Catalysis depends on Glu197, which acts as the Proton donor. Zn(2+) is bound at residue Asp275. Asp276 contacts substrate.

Belongs to the metallo-dependent hydrolases superfamily. Adenosine and AMP deaminases family. Adenine deaminase type 2 subfamily. It depends on Zn(2+) as a cofactor.

It catalyses the reaction adenine + H2O + H(+) = hypoxanthine + NH4(+). Its function is as follows. Catalyzes the hydrolytic deamination of adenine to hypoxanthine. Plays an important role in the purine salvage pathway and in nitrogen catabolism. This is Adenine deaminase from Vibrio parahaemolyticus serotype O3:K6 (strain RIMD 2210633).